An 86-amino-acid chain; its full sequence is Acyl carrier protein (86 aa).

The Carrier domain occupies 2–82 (ATVFERVKKV…AVVDYLKSKG (81 aa)). The residue at position 37 (serine 37) is an O-(pantetheine 4'-phosphoryl)serine.

The protein belongs to the acyl carrier protein (ACP) family. Post-translationally, 4'-phosphopantetheine is transferred from CoA to a specific serine of apo-ACP by AcpS. This modification is essential for activity because fatty acids are bound in thioester linkage to the sulfhydryl of the prosthetic group.

The protein resides in the cytoplasm. It participates in lipid metabolism; fatty acid biosynthesis. Functionally, carrier of the growing fatty acid chain in fatty acid biosynthesis. This is Acyl carrier protein from Dehalococcoides mccartyi (strain ATCC BAA-2100 / JCM 16839 / KCTC 5957 / BAV1).